The chain runs to 125 residues: Mitochondrial import inner membrane translocase subunit tim16-A (125 aa).

The interval 58-110 is J-like; that stretch reads EAQQILNVSKLTPEEIQKNYEHLFKVNDKGLGGSFYLQSKVVRAKERLDQEME.

It belongs to the TIM16/PAM16 family. Probable component of the PAM complex at least composed of 1 mitochondrial HSP70 protein, 1 GRPE, 1 TIMM44, 1 TIMM16/PAM16 and 1 TIMM14. Associates with the TIM23 complex.

The protein resides in the mitochondrion inner membrane. Regulates ATP-dependent protein translocation into the mitochondrial matrix. This chain is Mitochondrial import inner membrane translocase subunit tim16-A (pam16-a), found in Xenopus laevis (African clawed frog).